Consider the following 136-residue polypeptide: Histone H3.2 (136 aa).

A disordered region spans residues 1–42; that stretch reads MARTKQTARKSTGGKAPRKQLATKAARKSAPSAGGVKKPHRY. Lysine 5 carries the post-translational modification N6,N6,N6-trimethyllysine; alternate. Lysine 5 is modified (N6,N6-dimethyllysine; alternate). 2 positions are modified to N6-methyllysine; alternate: lysine 5 and lysine 10. At lysine 10 the chain carries N6-acetyllysine; alternate. Serine 11 carries the phosphoserine modification. Lysine 15 is modified (N6,N6-dimethyllysine; alternate). An N6-acetyllysine; alternate mark is found at lysine 15, lysine 19, lysine 24, lysine 28, and lysine 37. An N6-methyllysine; alternate mark is found at lysine 19, lysine 24, lysine 28, and lysine 37. N6,N6,N6-trimethyllysine; alternate occurs at positions 28 and 37. 2 positions are modified to N6,N6-dimethyllysine; alternate: lysine 28 and lysine 37. N6-acetyllysine is present on residues lysine 57 and lysine 65. N6,N6,N6-trimethyllysine; alternate is present on lysine 80. Lysine 80 is modified (N6,N6-dimethyllysine; alternate). Lysine 80 carries the post-translational modification N6-methyllysine; alternate.

Belongs to the histone H3 family. As to quaternary structure, the nucleosome is a histone octamer containing two molecules each of H2A, H2B, H3 and H4 assembled in one H3-H4 heterotetramer and two H2A-H2B heterodimers. The octamer wraps approximately 147 bp of DNA. Phosphorylated to form H3S10ph. H3S10ph promotes subsequent H3K14ac formation and is required for transcriptional activation through TBP recruitment to the promoters. Post-translationally, mono-, di- and trimethylated by the COMPASS complex to form H3K4me1/2/3. H3K4me activates gene expression by regulating transcription elongation and plays a role in telomere length maintenance. H3K4me enrichment correlates with transcription levels, and occurs in a 5' to 3' gradient with H3K4me3 enrichment at the 5'-end of genes, shifting to H3K4me2 and then H3K4me1. Methylated by SET2 to form H3K36me. H3K36me represses gene expression. Methylated by DOT1 to form H3K79me. H3K79me is required for association of SIR proteins with telomeric regions and for telomeric silencing. The COMPASS-mediated formation of H3K4me2/3 and the DOT1-mediated formation of H3K79me require H2BK123ub1. In terms of processing, acetylation of histone H3 leads to transcriptional activation. H3K14ac formation by GCN5 is promoted by H3S10ph. H3K14ac can also be formed by ESA1. H3K56ac formation occurs predominantly in newly synthesized H3 molecules during G1, S and G2/M of the cell cycle and may be involved in DNA repair.

It localises to the nucleus. The protein resides in the chromosome. Core component of nucleosome. Nucleosomes wrap and compact DNA into chromatin, limiting DNA accessibility to the cellular machineries which require DNA as a template. Histones thereby play a central role in transcription regulation, DNA repair, DNA replication and chromosomal stability. DNA accessibility is regulated via a complex set of post-translational modifications of histones, also called histone code, and nucleosome remodeling. This is Histone H3.2 (HHT2) from Mycosarcoma maydis (Corn smut fungus).